The following is a 110-amino-acid chain: Small ribosomal subunit protein bS16 (110 aa).

The span at 81-104 (VRPAEVLGKQKQEKERSAKKKDAA) shows a compositional bias: basic and acidic residues. Residues 81–110 (VRPAEVLGKQKQEKERSAKKKDAAASETSE) are disordered.

The protein belongs to the bacterial ribosomal protein bS16 family.

The polypeptide is Small ribosomal subunit protein bS16 (Prochlorococcus marinus (strain NATL2A)).